A 418-amino-acid polypeptide reads, in one-letter code: MKIKDFNIECDNLKIEENEFSKGSFAKVYKGSYYGNPVCVKVIKKDTLIDKESWVFLKREIGILKNLLNQGHKNIIRFIGIGEKDSLLFLVTELINGGDLGNILLDHKFHIPWSLRVKIAKDIAEGMEYLHSKQIMHRDLKSNNLLLGRNWTIKICDFGFAKEITIQNPLSMTICGTDEFMSPEVILGIQYSYSADIYSFGMVLLELITRSKLDERLPQNNFDIDYEELQNKIPSECPREFLELSMKCCNYDPNDRPSFTDIVQTLDQLAIKLVKETPDGPYPSTPIVVSNPHFDDQSINDWCMLSLIPDDCLENLNEFAEIENNINNNNNNNNNNNNKNNINNNNNNNNNNNNNNNNNNNCKVICENCASPQSTSSVNSSFSNSSLGSNGSNSSGTSTSSGGKKRSQKRKSWKCLIN.

The Protein kinase domain maps to 14–271 (KIEENEFSKG…IVQTLDQLAI (258 aa)). ATP-binding positions include 20–28 (FSKGSFAKV) and Lys41. Residue Asp139 is the Proton acceptor of the active site. Disordered regions lie at residues 327-356 (NNNNNNNNNNNNKNNINNNNNNNNNNNNNN) and 377-418 (SVNS…CLIN). Positions 377–402 (SVNSSFSNSSLGSNGSNSSGTSTSSG) are enriched in low complexity. Residues 403 to 418 (GKKRSQKRKSWKCLIN) are compositionally biased toward basic residues.

The protein belongs to the protein kinase superfamily. TKL Ser/Thr protein kinase family.

The catalysed reaction is L-seryl-[protein] + ATP = O-phospho-L-seryl-[protein] + ADP + H(+). The enzyme catalyses L-threonyl-[protein] + ATP = O-phospho-L-threonyl-[protein] + ADP + H(+). This is Probable serine/threonine-protein kinase DDB_G0280461 from Dictyostelium discoideum (Social amoeba).